We begin with the raw amino-acid sequence, 734 residues long: Homoaconitase, mitochondrial (734 aa).

Residues 1-25 (MGASNLLRFGAVTRISTPLLSRRSL) constitute a mitochondrion transit peptide. Residues C367, C427, and C430 each contribute to the [4Fe-4S] cluster site.

Belongs to the aconitase/IPM isomerase family. [4Fe-4S] cluster serves as cofactor.

It localises to the mitochondrion. It catalyses the reaction (2R,3S)-homoisocitrate = cis-homoaconitate + H2O. Its pathway is amino-acid biosynthesis; L-lysine biosynthesis via AAA pathway; L-alpha-aminoadipate from 2-oxoglutarate: step 3/5. In terms of biological role, catalyzes the reversible hydration of cis-homoaconitate to (2R,3S)-homoisocitrate, a step in the alpha-aminoadipate pathway for lysine biosynthesis. The protein is Homoaconitase, mitochondrial (LYS4) of Mycosarcoma maydis (Corn smut fungus).